A 281-amino-acid polypeptide reads, in one-letter code: 3'-5' exonuclease Snipper (281 aa).

The interval 19 to 52 (DGARPDPNNDPEESFNEDEVTEANSVPAKSKKSR) is disordered. A compositionally biased stretch (acidic residues) spans 27 to 39 (NDPEESFNEDEVT). The Exonuclease domain maps to 64–262 (YVIAVDFEAT…MCKMVRDGAL (199 aa)). Asp69 and Glu71 together coordinate Mg(2+). Glu71 functions as the Proton acceptor in the catalytic mechanism. Glu71 and Ala72 together coordinate AMP. Asp183 provides a ligand contact to Mg(2+). His240 serves as the catalytic Proton acceptor. His240 provides a ligand contact to AMP. Asp245 provides a ligand contact to Mg(2+).

This sequence belongs to the ERI2 family. The cofactor is Mg(2+).

Its subcellular location is the cytoplasm. The protein resides in the nucleus. The protein localises to the nucleolus. A broad-specificity exonuclease, capable of degrading both structure-specific DNA and RNA targets without sequence specificity in vitro. Requires two to five unpaired nucleotides in the 3' region for efficient binding and nuclease activity. Binds with higher affinity to RNA and DNA stem-loop substrates compared to single-stranded substrate. Binds to the 3'-end of histone mRNAs and degrades them, suggesting that it might play a role in histone mRNA decay after replication. Can readily cleave the histone stem-loop RNA beyond the -12 (UUU) position in the loop to produce -14 and then -16 oligonucleotide fragments for both the stem-loop and the reverse stem-loop. Cleaves both the single-stranded 3' flank as well as the double-stranded stem portion of histone stem-loop RNA. Might affect histone mRNA 3' processing thereby regulating histone protein expression. Has an important role in development and tissue formation. Might have a role in 5.8S rRNA precursor processing. This is 3'-5' exonuclease Snipper from Drosophila melanogaster (Fruit fly).